Consider the following 371-residue polypeptide: MTSIEPTHLGKKVIVGMSGGVDSSVSAYLLMKQGYQVEGLFMKNWEEDDTDEYCAAADDLKDAQAVCDKLGIKLHTVNFASEYWDNVFEYFLAEYKAGRTPNPDIMCNKEIKFKAFLEFADEILDADYIAMGHYVRRRDIDGTSQMLRGVDGNKDQSYFLYTLGYEQVARSLFPVGELDKSEVREIAKEMGLITHDKKDSTGICFIGERKFTDFLQTFLPAQPGNIETSEGEVIGTHQGLMYHTLGQRKGLGIGGLKNSNDDPWYVVEKDLVRNVLIVGQGGNHPRLMSNGLVANQLHWVDRKGPANGSKITVKTRYRQQDVPCSVTYDSDDVLRVIFDEPVAAVTPGQSAVFYDGEICLGGGIIDALIRD.

ATP contacts are provided by residues 16 to 23 and Met42; that span reads GMSGGVDS. The interaction with target base in tRNA stretch occupies residues 102 to 104; the sequence is NPD. Cys107 acts as the Nucleophile in catalysis. Cys107 and Cys204 form a disulfide bridge. Gly132 lines the ATP pocket. Residues 154-156 are interaction with tRNA; sequence KDQ. Cys204 (cysteine persulfide intermediate) is an active-site residue. Positions 316–317 are interaction with tRNA; the sequence is RY.

It belongs to the MnmA/TRMU family.

Its subcellular location is the cytoplasm. It carries out the reaction S-sulfanyl-L-cysteinyl-[protein] + uridine(34) in tRNA + AH2 + ATP = 2-thiouridine(34) in tRNA + L-cysteinyl-[protein] + A + AMP + diphosphate + H(+). In terms of biological role, catalyzes the 2-thiolation of uridine at the wobble position (U34) of tRNA, leading to the formation of s(2)U34. This is tRNA-specific 2-thiouridylase MnmA from Shewanella pealeana (strain ATCC 700345 / ANG-SQ1).